The chain runs to 525 residues: Beta-galactoside alpha-2,6-sialyltransferase 2 (525 aa).

Residues 1–11 (MKPHLKQWRQR) lie on the Cytoplasmic side of the membrane. Residues 12 to 32 (MLFAIFVWGLLFLAIFIYFTN) form a helical; Signal-anchor for type II membrane protein membrane-spanning segment. Residues 33–525 (SNPAAPMPSS…PVTRPNNTNT (493 aa)) are Lumenal-facing. Disordered regions lie at residues 85 to 107 (SASPFNSWPGDPQKGDQAQDGFD) and 145 to 183 (RQGALGLPSPGESSWQSGPGQPKQEKLRHPRRGSLPEEA). Intrachain disulfides connect Cys-249–Cys-515, Cys-292–Cys-444, and Cys-462–Cys-473. N-linked (GlcNAc...) asparagine glycosylation is found at Asn-303 and Asn-333. N-linked (GlcNAc...) asparagine glycosylation occurs at Asn-521.

Belongs to the glycosyltransferase 29 family.

The protein localises to the golgi apparatus. It is found in the golgi stack membrane. The enzyme catalyses a beta-D-galactoside + CMP-N-acetyl-beta-neuraminate = an N-acetyl-alpha-neuraminyl-(2-&gt;6)-beta-D-galactosyl derivative + CMP + H(+). Its function is as follows. Transfers sialic acid from the donor of substrate CMP-sialic acid to galactose containing acceptor substrates. Has alpha-2,6-sialyltransferase activity toward oligosaccharides that have the Gal-beta-1,4-GlcNAc sequence at the non-reducing end of their carbohydrate groups, but it has weak or no activities toward glycoproteins and glycolipids. The chain is Beta-galactoside alpha-2,6-sialyltransferase 2 (St6gal2) from Rattus norvegicus (Rat).